The sequence spans 638 residues: Ubiquitin-associated and SH3 domain-containing protein B (638 aa).

Ser-9 is modified (phosphoserine). Residue Thr-12 is modified to Phosphothreonine. The UBA domain maps to Thr-23–His-65. An SH3 domain is found at Ala-243–Glu-308. The interval Gly-369–Glu-638 is protein tyrosine phosphatase. Arg-379 is an active-site residue. Catalysis depends on His-380, which acts as the Tele-phosphohistidine intermediate. His-565 is an active-site residue.

Homodimer. Interacts with JAK2 (in vitro). Interacts with CBL. Part of a complex containing CBL and activated EGFR. Interacts with ubiquitin and with mono-ubiquitinated proteins. Interacts with ZAP70 (ubiquitinated form). Detected in splenic T-cells and B-cells, total spleen, skeletal muscle, heart, lung, kidney, thymus, brain and liver (at protein level). Highly expressed in brain. Detected in heart, spleen, lung, liver, kidney and testis.

It localises to the cytoplasm. The protein resides in the nucleus. It catalyses the reaction O-phospho-L-tyrosyl-[protein] + H2O = L-tyrosyl-[protein] + phosphate. In terms of biological role, interferes with CBL-mediated down-regulation and degradation of receptor-type tyrosine kinases. Promotes accumulation of activated target receptors, such as T-cell receptors and EGFR, on the cell surface. Exhibits tyrosine phosphatase activity toward several substrates including EGFR, FAK, SYK, and ZAP70. Down-regulates proteins that are dually modified by both protein tyrosine phosphorylation and ubiquitination. This chain is Ubiquitin-associated and SH3 domain-containing protein B (Ubash3b), found in Mus musculus (Mouse).